The primary structure comprises 99 residues: MTLKKYKGKYVILWPQYFDSSLSRKEGRRVPRELAVARPSQKELLEVAAALGLEAKPLEGKYPREWWNKEGPVLVEKRGSKREVITLLAKELRRRRYGK.

The protein belongs to the SRP19 family. In terms of assembly, part of the signal recognition particle protein translocation system, which is composed of SRP and FtsY. Archaeal SRP consists of a 7S RNA molecule of 300 nucleotides and two protein subunits: SRP54 and SRP19.

The protein resides in the cytoplasm. In terms of biological role, involved in targeting and insertion of nascent membrane proteins into the cytoplasmic membrane. Binds directly to 7S RNA and mediates binding of the 54 kDa subunit of the SRP. In Ignicoccus hospitalis (strain KIN4/I / DSM 18386 / JCM 14125), this protein is Signal recognition particle 19 kDa protein.